The chain runs to 356 residues: Putative [LysW]-L-2-aminoadipate/[LysW]-L-glutamate phosphate reductase (356 aa).

11-14 (SGYT) contributes to the NADP(+) binding site. Residue Cys157 is part of the active site. Asn323 is a binding site for NADP(+).

The protein belongs to the NAGSA dehydrogenase family. Type 1 subfamily. LysY sub-subfamily.

It is found in the cytoplasm. It catalyses the reaction [amino-group carrier protein]-C-terminal-N-(1-carboxy-5-oxopentan-1-yl)-L-glutamine + phosphate + NADP(+) = [amino-group carrier protein]-C-terminal-N-(1-carboxy-5-phosphooxy-5-oxopentan-1-yl)-L-glutamine + NADPH + H(+). The enzyme catalyses [amino-group carrier protein]-C-terminal-gamma-(L-glutamyl-5-semialdehyde)-L-glutamate + phosphate + NADP(+) = [amino-group carrier protein]-C-terminal-gamma-(5-phospho-L-glutamyl)-L-glutamate + NADPH + H(+). The protein operates within amino-acid biosynthesis; L-lysine biosynthesis via AAA pathway; L-lysine from L-alpha-aminoadipate (Thermus route): step 3/5. It functions in the pathway amino-acid biosynthesis; L-arginine biosynthesis. Its function is as follows. Involved in both the arginine and lysine biosynthetic pathways. This Ignicoccus hospitalis (strain KIN4/I / DSM 18386 / JCM 14125) protein is Putative [LysW]-L-2-aminoadipate/[LysW]-L-glutamate phosphate reductase.